Reading from the N-terminus, the 96-residue chain is Citrate lyase acyl carrier protein (96 aa).

Ser14 carries the post-translational modification O-(phosphoribosyl dephospho-coenzyme A)serine.

Belongs to the CitD family. In terms of assembly, oligomer with a subunit composition of (alpha,beta,gamma)6.

Its subcellular location is the cytoplasm. Functionally, covalent carrier of the coenzyme of citrate lyase. In Pectobacterium carotovorum subsp. carotovorum (strain PC1), this protein is Citrate lyase acyl carrier protein.